Here is a 441-residue protein sequence, read N- to C-terminus: Xylose isomerase (441 aa).

Residues histidine 99 and aspartate 102 contribute to the active site. The Mg(2+) site is built by glutamate 230, glutamate 266, histidine 269, aspartate 294, aspartate 305, aspartate 307, and aspartate 337.

It belongs to the xylose isomerase family. As to quaternary structure, homotetramer. Mg(2+) is required as a cofactor.

Its subcellular location is the cytoplasm. The catalysed reaction is alpha-D-xylose = alpha-D-xylulofuranose. Functionally, exhibits xylose isomerase activity. This chain is Xylose isomerase (xylA), found in Bacillus sp. (strain LW2).